The chain runs to 430 residues: UPF0597 protein BDI_1130 (430 aa).

This sequence belongs to the UPF0597 family.

The sequence is that of UPF0597 protein BDI_1130 from Parabacteroides distasonis (strain ATCC 8503 / DSM 20701 / CIP 104284 / JCM 5825 / NCTC 11152).